Here is a 244-residue protein sequence, read N- to C-terminus: MSSQDVLIHSDDPCHPANLICTLCKQFFHNNWCTGTGGGISIKDPNTNYYYLAPSGVQKEKMTPEDLFVMDAQTLEYLRSPKLYKPSACTPLFLACYQKKDAGAIIHTHSQNAVICSLVFGDEFRIANIEQIKAIPSGKVDPVTKKPMALSFFDTLKIPIIENMAHEDELIDDLHKTFKDYPDTCAVIVRRHGIFVWGPTIDKAKIFNEAIDYLMELAIKMYQMGIPPDCGIGEEKKHLKMASP.

Cys89 serves as a coordination point for substrate. His107 and His109 together coordinate Zn(2+). The active-site Proton donor/acceptor is the Glu130. His192 contacts Zn(2+).

This sequence belongs to the aldolase class II family. MtnB subfamily. It depends on Zn(2+) as a cofactor.

It localises to the cytoplasm. The catalysed reaction is 5-(methylsulfanyl)-D-ribulose 1-phosphate = 5-methylsulfanyl-2,3-dioxopentyl phosphate + H2O. The protein operates within amino-acid biosynthesis; L-methionine biosynthesis via salvage pathway; L-methionine from S-methyl-5-thio-alpha-D-ribose 1-phosphate: step 2/6. Catalyzes the dehydration of methylthioribulose-1-phosphate (MTRu-1-P) into 2,3-diketo-5-methylthiopentyl-1-phosphate (DK-MTP-1-P). In Saccharomyces cerevisiae (strain AWRI1631) (Baker's yeast), this protein is Methylthioribulose-1-phosphate dehydratase.